Consider the following 317-residue polypeptide: Gluconeogenesis factor (317 aa).

It belongs to the gluconeogenesis factor family.

It is found in the cytoplasm. In terms of biological role, required for morphogenesis under gluconeogenic growth conditions. Required, in gluconeogenic growth conditions, for the correct localization of PBP1 and hence for displaying a normal rod shape. The sequence is that of Gluconeogenesis factor (mgfK) from Bacillus subtilis (strain 168).